A 79-amino-acid chain; its full sequence is Putative defensin-like protein 274 (79 aa).

The first 23 residues, 1–23 (MASSRFQLVALLVVFSLVISITA), serve as a signal peptide directing secretion. Intrachain disulfides connect cysteine 35–cysteine 76, cysteine 41–cysteine 64, cysteine 47–cysteine 74, and cysteine 51–cysteine 75.

This sequence belongs to the DEFL family.

It localises to the secreted. In Arabidopsis thaliana (Mouse-ear cress), this protein is Putative defensin-like protein 274.